The following is a 739-amino-acid chain: Transcription activator of gluconeogenesis MCYG_04674 (739 aa).

The segment covering 1-33 (MSPHQTTGQESDNMAVNGENAQASSQYIQLNSE) has biased composition (polar residues). The tract at residues 1–62 (MSPHQTTGQE…PSRPKRKKAK (62 aa)) is disordered. A compositionally biased stretch (basic and acidic residues) spans 40 to 55 (AAEKKAAAAKAKDPSR). Residues 65–93 (CYACQRGHLTCGDERPCQRCIKRGFQDAC) constitute a DNA-binding region (zn(2)-C6 fungal-type). Disordered stretches follow at residues 174–223 (GPEN…QFNS), 264–308 (DTPP…GDSG), 380–420 (SRQN…HKNA), 537–574 (NHNVNTGGSSGLLTGSTSRGSYTPRPYSSDQFNSSTTA), and 639–668 (AQNNEVGSGEANELNSSSNGTTSTGRGQRR). 2 stretches are compositionally biased toward polar residues: residues 267 to 284 (PSDNGAQRGSIGQNSSGT) and 397 to 411 (PVVSTPQLKQQNLNI). Over residues 547–557 (GLLTGSTSRGS) the composition is skewed to low complexity. Positions 562–574 (PYSSDQFNSSTTA) are enriched in polar residues. Low complexity predominate over residues 653–664 (NSSSNGTTSTGR).

Belongs to the ERT1/acuK family.

The protein localises to the nucleus. Functionally, transcription factor which regulates nonfermentable carbon utilization. Activator of gluconeogenetic genes. The chain is Transcription activator of gluconeogenesis MCYG_04674 from Arthroderma otae (strain ATCC MYA-4605 / CBS 113480) (Microsporum canis).